Here is a 395-residue protein sequence, read N- to C-terminus: Flagellin A (395 aa).

Belongs to the bacterial flagellin family.

It localises to the secreted. The protein localises to the bacterial flagellum. Functionally, flagellin is the subunit protein which polymerizes to form the filaments of bacterial flagella. Homomer of FlaA is able to form a functional filament. The sequence is that of Flagellin A (flaA) from Rhizobium meliloti (Ensifer meliloti).